A 73-amino-acid polypeptide reads, in one-letter code: Putative membrane protein insertion efficiency factor (73 aa).

It belongs to the UPF0161 family.

It localises to the cell inner membrane. Its function is as follows. Could be involved in insertion of integral membrane proteins into the membrane. The sequence is that of Putative membrane protein insertion efficiency factor from Neisseria gonorrhoeae (strain ATCC 700825 / FA 1090).